The chain runs to 171 residues: uncharacterized protein (171 aa).

It belongs to the mimivirus R24/R907 family.

This is an uncharacterized protein from Acanthamoeba polyphaga (Amoeba).